Consider the following 275-residue polypeptide: Penicillin-insensitive murein endopeptidase (275 aa).

The first 19 residues, 1–19 (MKNWIVGMVALVTMVPVMA), serve as a signal peptide directing secretion. Cystine bridges form between Cys44–Cys264, Cys187–Cys235, and Cys216–Cys223. His110, His113, Asp120, Asp147, and His211 together coordinate Zn(2+). A disordered region spans residues 227 to 262 (DTPPPGDGCGAELESWFQPPPPSAKPGKTLPPPLPP). The span at 244-262 (QPPPPSAKPGKTLPPPLPP) shows a compositional bias: pro residues.

This sequence belongs to the peptidase M74 family. In terms of assembly, dimer. The cofactor is Zn(2+).

The protein localises to the periplasm. Murein endopeptidase that cleaves the D-alanyl-meso-2,6-diamino-pimelyl amide bond that connects peptidoglycan strands. Likely plays a role in the removal of murein from the sacculus. The protein is Penicillin-insensitive murein endopeptidase of Yersinia pestis.